Here is a 431-residue protein sequence, read N- to C-terminus: Enolase (431 aa).

Gln-167 lines the (2R)-2-phosphoglycerate pocket. Residue Glu-209 is the Proton donor of the active site. Mg(2+) is bound by residues Asp-246, Glu-290, and Asp-317. The (2R)-2-phosphoglycerate site is built by Lys-342, Arg-371, Ser-372, and Lys-393. Catalysis depends on Lys-342, which acts as the Proton acceptor.

The protein belongs to the enolase family. Component of the RNA degradosome, a multiprotein complex involved in RNA processing and mRNA degradation. Requires Mg(2+) as cofactor.

It is found in the cytoplasm. The protein resides in the secreted. It localises to the cell surface. It catalyses the reaction (2R)-2-phosphoglycerate = phosphoenolpyruvate + H2O. It participates in carbohydrate degradation; glycolysis; pyruvate from D-glyceraldehyde 3-phosphate: step 4/5. Catalyzes the reversible conversion of 2-phosphoglycerate (2-PG) into phosphoenolpyruvate (PEP). It is essential for the degradation of carbohydrates via glycolysis. This Yersinia pseudotuberculosis serotype O:1b (strain IP 31758) protein is Enolase.